Reading from the N-terminus, the 123-residue chain is Intracellular iron chaperone frataxin (123 aa).

In terms of assembly, homodimer, upon Fe(2+) binding. Interacts with the SufS/SufU complex. Interacts with CpfC. Requires Fe(2+) as cofactor.

The protein localises to the cytoplasm. In terms of biological role, plays an essential role in iron intracellular trafficking to iron cofactor biogenesis systems including iron-sulfur cluster (Fe-S) or heme assembly. Promotes the biosynthesis of iron-sulfur clusters by delivering Fe to the complex composed of the cysteine desulfurase SufS and the zinc-dependent sulfurtransferase SufU. Also plays a critical role in coproporphyrin-dependent heme b biogenesis and thus provides an essential function for the bacterial global metabolism. The protein is Intracellular iron chaperone frataxin (fra) of Bacillus subtilis (strain 168).